The following is a 246-amino-acid chain: Small ribosomal subunit protein uS2 (246 aa).

This sequence belongs to the universal ribosomal protein uS2 family. In terms of assembly, component of the small ribosomal subunit. Mature ribosomes consist of a small (40S) and a large (60S) subunit. The 40S subunit contains about 33 different proteins and 1 molecule of RNA (18S). The 60S subunit contains about 49 different proteins and 3 molecules of RNA (25S, 5.8S and 5S). Interacts with ribosomal protein S21.

The protein localises to the cytoplasm. Functionally, required for the assembly and/or stability of the 40S ribosomal subunit. Required for the processing of the 20S rRNA-precursor to mature 18S rRNA in a late step of the maturation of 40S ribosomal subunits. The polypeptide is Small ribosomal subunit protein uS2 (Leishmania infantum).